A 191-amino-acid polypeptide reads, in one-letter code: dCTP deaminase (191 aa).

Residues 112–117, 136–138, glutamine 157, tyrosine 173, and glutamine 183 each bind dCTP; these read KSTYAR and TLE. The active-site Proton donor/acceptor is the glutamate 138.

It belongs to the dCTP deaminase family. As to quaternary structure, homotrimer.

The catalysed reaction is dCTP + H2O + H(+) = dUTP + NH4(+). The protein operates within pyrimidine metabolism; dUMP biosynthesis; dUMP from dCTP (dUTP route): step 1/2. Catalyzes the deamination of dCTP to dUTP. This chain is dCTP deaminase, found in Psychrobacter arcticus (strain DSM 17307 / VKM B-2377 / 273-4).